We begin with the raw amino-acid sequence, 282 residues long: ATP synthase gamma chain (282 aa).

This sequence belongs to the ATPase gamma chain family. As to quaternary structure, F-type ATPases have 2 components, CF(1) - the catalytic core - and CF(0) - the membrane proton channel. CF(1) has five subunits: alpha(3), beta(3), gamma(1), delta(1), epsilon(1). CF(0) has three main subunits: a, b and c.

It localises to the cell membrane. In terms of biological role, produces ATP from ADP in the presence of a proton gradient across the membrane. The gamma chain is believed to be important in regulating ATPase activity and the flow of protons through the CF(0) complex. The polypeptide is ATP synthase gamma chain (Clostridium botulinum (strain 657 / Type Ba4)).